The chain runs to 404 residues: Cysteine desulfurase IscS (404 aa).

Residues 75-76 (AT), Asn155, Gln183, and 203-205 (SAH) each bind pyridoxal 5'-phosphate. An N6-(pyridoxal phosphate)lysine modification is found at Lys206. Residue Thr243 coordinates pyridoxal 5'-phosphate. Residue Cys328 is the Cysteine persulfide intermediate of the active site. Residue Cys328 coordinates [2Fe-2S] cluster.

The protein belongs to the class-V pyridoxal-phosphate-dependent aminotransferase family. NifS/IscS subfamily. In terms of assembly, homodimer. Forms a heterotetramer with IscU, interacts with other sulfur acceptors. Pyridoxal 5'-phosphate serves as cofactor.

It localises to the cytoplasm. It carries out the reaction (sulfur carrier)-H + L-cysteine = (sulfur carrier)-SH + L-alanine. Its pathway is cofactor biosynthesis; iron-sulfur cluster biosynthesis. In terms of biological role, master enzyme that delivers sulfur to a number of partners involved in Fe-S cluster assembly, tRNA modification or cofactor biosynthesis. Catalyzes the removal of elemental sulfur atoms from cysteine to produce alanine. Functions as a sulfur delivery protein for Fe-S cluster synthesis onto IscU, an Fe-S scaffold assembly protein, as well as other S acceptor proteins. This is Cysteine desulfurase IscS from Vesicomyosocius okutanii subsp. Calyptogena okutanii (strain HA).